The primary structure comprises 122 residues: Large ribosomal subunit protein bL12 (122 aa).

The protein belongs to the bacterial ribosomal protein bL12 family. Homodimer. Part of the ribosomal stalk of the 50S ribosomal subunit. Forms a multimeric L10(L12)X complex, where L10 forms an elongated spine to which 2 to 4 L12 dimers bind in a sequential fashion. Binds GTP-bound translation factors.

In terms of biological role, forms part of the ribosomal stalk which helps the ribosome interact with GTP-bound translation factors. Is thus essential for accurate translation. In Cellvibrio japonicus (strain Ueda107) (Pseudomonas fluorescens subsp. cellulosa), this protein is Large ribosomal subunit protein bL12.